A 224-amino-acid chain; its full sequence is LexA repressor (224 aa).

Positions 29-49 (RAEIARALGFRSPNAAEDHLK) form a DNA-binding region, H-T-H motif. Residues S142 and K179 each act as for autocatalytic cleavage activity in the active site.

This sequence belongs to the peptidase S24 family. Homodimer.

It catalyses the reaction Hydrolysis of Ala-|-Gly bond in repressor LexA.. Its function is as follows. Represses a number of genes involved in the response to DNA damage (SOS response), including recA and lexA. In the presence of single-stranded DNA, RecA interacts with LexA causing an autocatalytic cleavage which disrupts the DNA-binding part of LexA, leading to derepression of the SOS regulon and eventually DNA repair. The protein is LexA repressor of Bordetella petrii (strain ATCC BAA-461 / DSM 12804 / CCUG 43448).